Consider the following 398-residue polypeptide: Histidinol dehydrogenase (398 aa).

Residues Y114, Q176, and N199 each contribute to the NAD(+) site. Residues T222, Q244, and H247 each coordinate substrate. The Zn(2+) site is built by Q244 and H247. Catalysis depends on proton acceptor residues E298 and H299. H299, D331, E384, and H389 together coordinate substrate. D331 provides a ligand contact to Zn(2+). H389 lines the Zn(2+) pocket.

This sequence belongs to the histidinol dehydrogenase family. Zn(2+) serves as cofactor.

The enzyme catalyses L-histidinol + 2 NAD(+) + H2O = L-histidine + 2 NADH + 3 H(+). Its pathway is amino-acid biosynthesis; L-histidine biosynthesis; L-histidine from 5-phospho-alpha-D-ribose 1-diphosphate: step 9/9. Catalyzes the sequential NAD-dependent oxidations of L-histidinol to L-histidinaldehyde and then to L-histidine. The protein is Histidinol dehydrogenase (hisD) of Saccharolobus solfataricus (strain ATCC 35092 / DSM 1617 / JCM 11322 / P2) (Sulfolobus solfataricus).